The sequence spans 434 residues: Glutamate-1-semialdehyde 2,1-aminomutase (434 aa).

At Lys274 the chain carries N6-(pyridoxal phosphate)lysine.

The protein belongs to the class-III pyridoxal-phosphate-dependent aminotransferase family. HemL subfamily. In terms of assembly, homodimer. Pyridoxal 5'-phosphate serves as cofactor.

It is found in the cytoplasm. It carries out the reaction (S)-4-amino-5-oxopentanoate = 5-aminolevulinate. The protein operates within porphyrin-containing compound metabolism; protoporphyrin-IX biosynthesis; 5-aminolevulinate from L-glutamyl-tRNA(Glu): step 2/2. In Acidovorax ebreus (strain TPSY) (Diaphorobacter sp. (strain TPSY)), this protein is Glutamate-1-semialdehyde 2,1-aminomutase.